Consider the following 374-residue polypeptide: MRIGMICPYSFDVPGGVQSHVLQLAEVMRARGQQVRVLAPASPDVSLPEYVVSAGRAIPIPYNGSVARLQFSPAVHSRVRRWLVDGDFDVLHLHEPNAPSLSMWALRVAEGPIVATFHTSTTKSLTLSVFQGVLRPWHEKIIGRIAVSDLARRWQMEALGSDAVEIPNGVNVDSLSSAPQLAGYPRLGKTVLFLGRYDEPRKGMSVLLDALPGVMECFDDVQLLIVGRGDEEQLRSQAGGLVEHIRFLGQVDDAGKAAAMRSADVYCAPNIGGESFGIVLVEAMAAGTPVVASDLDAFRRVLRDGEVGHLVPAGDSAALADALVALLRNDVLRERYVAAGAEAVRRYDWSVVASQIMRVYETVATSGSKVQVAS.

The GDP-alpha-D-mannose site is built by Tyr-9 and Gly-16. A 1,2-diacyl-sn-glycero-3-phospho-(1D-myo-inositol) contacts are provided by residues Gln-18, 62 to 63, and Arg-68; that span reads YN. GDP-alpha-D-mannose contacts are provided by residues Arg-196, 201-202, 251-253, Lys-256, 274-278, and Glu-282; these read RK, VDD, and ESFGI.

This sequence belongs to the glycosyltransferase group 1 family. Glycosyltransferase 4 subfamily. As to quaternary structure, monomer. Mg(2+) is required as a cofactor.

It is found in the cell membrane. It catalyses the reaction a 1,2-diacyl-sn-glycero-3-phospho-(1D-myo-inositol) + GDP-alpha-D-mannose = a 1,2-diacyl-sn-glycero-3-phospho-[alpha-D-mannopyranosyl-(1&lt;-&gt;6)-D-myo-inositol] + GDP + H(+). It functions in the pathway phospholipid metabolism; phosphatidylinositol metabolism. Functionally, involved in the biosynthesis of phosphatidyl-myo-inositol mannosides (PIM) which are early precursors in the biosynthesis of lipomannans (LM) and lipoarabinomannans (LAM). Catalyzes the addition of a mannosyl residue from GDP-D-mannose (GDP-Man) to the position 2 of the carrier lipid phosphatidyl-myo-inositol (PI) to generate a phosphatidyl-myo-inositol bearing an alpha-1,2-linked mannose residue (PIM1). The polypeptide is Phosphatidyl-myo-inositol mannosyltransferase (Mycobacterium leprae (strain TN)).